Here is a 255-residue protein sequence, read N- to C-terminus: Probable esterase ATEG_07663 (255 aa).

Active-site charge relay system residues include serine 122, aspartate 200, and histidine 227.

The protein belongs to the LovG family.

In terms of biological role, probable esterase; part of the cluster B that mediates the biosynthesis of azasperpyranones, members of the azaphilone family that exhibit anti-cancer activities. Azasperpyranones are synthesized by 2 clusters, A and B. Cluster A is responsible for the production of the polyhydric phenol moiety while the azaphilonoid scaffold is produced by the cluster B. The non-reducing polyketide synthase ATEG_03629 produces 5-methyl orsellinic acid, which is then reduced to 5-methyl orsellinic aldehyde by the NRPS-like protein ATEG_03630. 5-methyl orsellinic aldehyde is then first hydroxylated by the FAD-dependent monooxygenase ATEG_03635 and subsequently hydroxylated by the cytochrome P450 monooxygenase ATEG_03631 to produce the unstable polyhydric phenol precursor of azasperpyranones. On the other hand, the polyketide synthase ATEG_07659 is responsible for producing the 3,5-dimethyloctadienone moiety from acetyl-CoA, three malonyl-CoA, and two S-adenosyl methionines (SAM). The 3,5-dimethyloctadienone moiety is then loaded onto the SAT domain of ATEG_07661 and extended with four malonyl-CoA and one SAM, which leads to the formation of 2,4-dihydroxy-6-(5,7-dimethyl-2-oxo-trans-3-trans-5-nonadienyl)-3-methylbenzaldehyde (compound 8) after reductive release and aldol condensation. The FAD-dependent monooxygenase ATEG_07662 is the next enzyme in the biosynthesis sequence and hydroxylates the side chain at the benzylic position of compound 8. In Aspergillus nidulans, afoF, the ortholog of the FAD-dependent oxygenase ATEG_07660, is the key enzyme for the biosynthesis of asperfuranone by catalyzing the hydroxylation at C-8 of to prevent the formation of a six-membered ring hemiacetal intermediate and thus facilitating the formation of a five-membered ring to produce asperfuranone. In Aspergillus terreus, ATEG_07660 is probably not functional, which leads to the formation of the six-membered ring hemiacetal intermediate presperpyranone instead of asperfuranone. Finally, ATEG_03636 is involved in the condensation of the polyhydric phenol moiety produced by cluster A and the perasperpyranone precursor produced by cluster B, to yield azasperpyranone A. Further modifications of azasperpyranone A result in the production of derivatives, including azasperpyranone B to F. This chain is Probable esterase ATEG_07663, found in Aspergillus terreus (strain NIH 2624 / FGSC A1156).